Reading from the N-terminus, the 208-residue chain is Small ribosomal subunit protein uS4 (208 aa).

The S4 RNA-binding domain maps to S98–A164.

Belongs to the universal ribosomal protein uS4 family. Part of the 30S ribosomal subunit. Contacts protein S5. The interaction surface between S4 and S5 is involved in control of translational fidelity.

In terms of biological role, one of the primary rRNA binding proteins, it binds directly to 16S rRNA where it nucleates assembly of the body of the 30S subunit. Functionally, with S5 and S12 plays an important role in translational accuracy. The protein is Small ribosomal subunit protein uS4 of Nitrosococcus oceani (strain ATCC 19707 / BCRC 17464 / JCM 30415 / NCIMB 11848 / C-107).